The primary structure comprises 498 residues: ATP synthase subunit beta, chloroplastic (498 aa).

172–179 lines the ATP pocket; the sequence is GGAGVGKT.

Belongs to the ATPase alpha/beta chains family. As to quaternary structure, F-type ATPases have 2 components, CF(1) - the catalytic core - and CF(0) - the membrane proton channel. CF(1) has five subunits: alpha(3), beta(3), gamma(1), delta(1), epsilon(1). CF(0) has four main subunits: a(1), b(1), b'(1) and c(9-12).

Its subcellular location is the plastid. The protein resides in the chloroplast thylakoid membrane. The catalysed reaction is ATP + H2O + 4 H(+)(in) = ADP + phosphate + 5 H(+)(out). In terms of biological role, produces ATP from ADP in the presence of a proton gradient across the membrane. The catalytic sites are hosted primarily by the beta subunits. This chain is ATP synthase subunit beta, chloroplastic, found in Buxus microphylla (Littleleaf boxwood).